A 315-amino-acid chain; its full sequence is Homoserine kinase (315 aa).

Proline 97–threonine 107 is a binding site for ATP.

It belongs to the GHMP kinase family. Homoserine kinase subfamily.

Its subcellular location is the cytoplasm. The enzyme catalyses L-homoserine + ATP = O-phospho-L-homoserine + ADP + H(+). It participates in amino-acid biosynthesis; L-threonine biosynthesis; L-threonine from L-aspartate: step 4/5. Functionally, catalyzes the ATP-dependent phosphorylation of L-homoserine to L-homoserine phosphate. The protein is Homoserine kinase of Synechococcus sp. (strain CC9605).